A 249-amino-acid chain; its full sequence is Protein twisted gastrulation (249 aa).

Positions 1-23 are cleaved as a signal peptide; it reads MQLLCYFVILFVGIAPWSSLAND. Asn199 carries N-linked (GlcNAc...) asparagine glycosylation.

This sequence belongs to the twisted gastrulation protein family. Component of a complex composed of dpp, sog and tsg. As to expression, first appears in stage 4 embryos, expressed in two domains: a broad mid-dorsal saddle and an anterior cap, expression between the domains is continuous across the dorsal midline. At stage 5, expression is refined into 4 graded stripes in the mid-dorsal region and a paired domain in the anterior region. During stages 7 and 8, anterior expression fades and the mid dorsal stripes are located between the anterior and posterior transverse furrow (ATF and PTF). Expressing cells become incorporated into the deepening PTF.

It localises to the secreted. Functionally, involved in dorsal-ventral patterning. Required for specification of a narrow strip of dorsal midline cells that will give rise to the amnioserosa, but not for specification of dorsal ectoderm cells. Inhibits BMP signaling; enhances the binding of sog to dpp, thus enhancing the antagonistic activity of sog. The chain is Protein twisted gastrulation (tsg) from Drosophila melanogaster (Fruit fly).